A 1002-amino-acid polypeptide reads, in one-letter code: SGGFDFSFLPQPPQEKGPMGLMGPRGPPGASGAPGPQGFQGPAGEPGEPGQTGPAGARGPAGPPGKAGGVVGPQGARGFPGTPGLPGFKGIRGHNGLDGLKGQPGAPGVKGEPGAPGENGTPGQTGARGLPGERGRVGAPGPAGSRGSDGSVGPVGPAGPIGSAGPPGFPGAPGPKGELGPVGNTGPGPAGPRGEQGLPGVSGPVGPPGNPGANGLTGAKGAAGLPGVAGAPGLPGPRGIPGPVGASGATGARGLVGEPGPAGSKGESGGKGEPGSAGPQGPPGSSGEEGKRGPSGESGSTGPTGPPGLRGGPGSRGLPGADGRAGVIGPAGARGASGPAGVRGPSGDTGRPGEPGLMGARGLPGSPGNVGPAGKEGPAGLPGIDGRPGPIGPAGARGEAGNIGFPGPKGPAGDPGKAGEKGHAGLAGNRGAPGPDGNNGAQGPPGLQGVQGGKGEQGPAGPPGFQGLPGPAGTTGEAGKPGERGIPGEFGLPGPAGPRGERGPPGESGAVGPSGAIGSRGPSGPPGPDGNKGEPGVVGAPGTAGPAGSGGLPGERGAAGIPGGKGEKGETGLRGEVGTTGRDGARGAPGAVGAPGPAGATGDRGEAGAAGPAGPAGPRGSPGERGEVGPAGPNGFAGPAGAAGQPGAKGERGTKGPKGENGIVGPTGPVGSAGPAGPNGPAGPAGSRGDGGPPGVTGFPGAAGRTGPPGPSGITGPPGPPGAAGKEGLRGPRGDQGPVGRTGETGAGGPPGFTGEKGPSGEPGTAGPPGTAGPQGLLGAPGILGLPGSRGERGLPGVAGAVGEPGPLGIGPPGARGPSGGVGPGVNGAPGEAGRDGPPGRDGLPGHKGERGYAGNAGPVGAAGAPGPHGAVGPAGKHGNRGEPGPVGSAGPVGALGPRGPSGPQGIRGDKGEAGDKGPRGLPGGLQGLPGLAGQHGDQGAPGPVGPAGPRGPAGPSGPPGKDGRTGHPGAVGPAGIRGSQGSQGPSGPPGPPGPPGPPGAS.

The tract at residues Ser1–Ser1002 is disordered. 4 positions are modified to 4-hydroxyproline: Pro10, Pro13, Pro28, and Pro34. Residues Gly17–Pro60 show a composition bias toward low complexity. Position 89 is a 5-hydroxylysine; alternate (Lys89). Lys89 carries an O-linked (Gal...) hydroxylysine; alternate glycan. Composition is skewed to low complexity over residues Ser145–Pro166 and Pro211–Pro232. A compositionally biased stretch (gly residues) spans Gly266–Gly275. The segment covering Ser276 to Ser286 has biased composition (low complexity). Positions Gly308 to Gly317 are enriched in gly residues. A compositionally biased stretch (low complexity) spans Pro330–Ser346. Pro352 and Pro355 each carry 4-hydroxyproline. The span at Leu381–Ala400 shows a compositional bias: low complexity. Residues Gly449–Gly458 are compositionally biased toward gly residues. 2 stretches are compositionally biased toward low complexity: residues Pro505–Pro522 and Glu534–Ala544. Residues Gly545–Gly554 show a composition bias toward gly residues. Composition is skewed to low complexity over residues Val577–Ser621 and Val628–Ala648. Positions Lys649–Lys658 are enriched in basic and acidic residues. The segment covering Pro666 to Ala676 has biased composition (low complexity). Residues Gly686–Gly695 are compositionally biased toward gly residues. A compositionally biased stretch (low complexity) spans Thr697–Thr706. Positions Gly743–Gly752 are enriched in gly residues. 2 stretches are compositionally biased toward low complexity: residues Ser760–Pro787 and Leu795–Pro805. Residues Gly806–Gly828 are compositionally biased toward gly residues. Over residues Ala833–Arg851 the composition is skewed to basic and acidic residues. Positions Tyr853–Pro898 are enriched in low complexity. The span at Arg908–Pro919 shows a compositional bias: basic and acidic residues. A compositionally biased stretch (pro residues) spans Ser987–Ser1002.

It belongs to the fibrillar collagen family. As to quaternary structure, trimers of one alpha 2(I) and two alpha 1(I) chains. Interacts (via C-terminus) with TMEM131 (via PapD-L domain); the interaction is direct and is involved in assembly and TRAPPIII ER-to-Golgi transport complex-dependent secretion of collagen. In terms of processing, prolines at the third position of the tripeptide repeating unit (G-X-Y) are hydroxylated in some or all of the chains. In terms of tissue distribution, expressed in bones.

It is found in the secreted. The protein localises to the extracellular space. It localises to the extracellular matrix. Functionally, type I collagen is a member of group I collagen (fibrillar forming collagen). This Glossotherium robustum (Ground sloth) protein is Collagen alpha-2(I) chain.